The following is a 193-amino-acid chain: Resuscitation-promoting factor Rpf1 (193 aa).

The signal sequence occupies residues 1–35; sequence MGRHSTKTSSAFTKLAASTIAFGAAATIMAPSASA.

This sequence belongs to the transglycosylase family. Rpf subfamily.

Its subcellular location is the secreted. In terms of biological role, factor that stimulates resuscitation of dormant cells. Has peptidoglycan (PG) hydrolytic activity. Active in the pM concentration range. Has little to no effect on actively-growing cells. PG fragments could either directly activate the resuscitation pathway of dormant bacteria or serve as a substrate for endogenous Rpf, resulting in low molecular weight products with resuscitation activity. In Corynebacterium glutamicum (strain ATCC 13032 / DSM 20300 / JCM 1318 / BCRC 11384 / CCUG 27702 / LMG 3730 / NBRC 12168 / NCIMB 10025 / NRRL B-2784 / 534), this protein is Resuscitation-promoting factor Rpf1 (rpf1).